The chain runs to 266 residues: Glutamate racemase (266 aa).

Substrate-binding positions include 9 to 10 (DS) and 41 to 42 (YG). The active-site Proton donor/acceptor is the Cys72. 73 to 74 (NT) is a binding site for substrate. Cys183 serves as the catalytic Proton donor/acceptor. Residue 184–185 (TH) participates in substrate binding.

It belongs to the aspartate/glutamate racemases family.

The catalysed reaction is L-glutamate = D-glutamate. It functions in the pathway cell wall biogenesis; peptidoglycan biosynthesis. Provides the (R)-glutamate required for cell wall biosynthesis. This is Glutamate racemase from Listeria monocytogenes serotype 4b (strain CLIP80459).